Here is a 122-residue protein sequence, read N- to C-terminus: Large ribosomal subunit protein uL14 (122 aa).

The protein belongs to the universal ribosomal protein uL14 family. As to quaternary structure, part of the 50S ribosomal subunit. Forms a cluster with proteins L3 and L19. In the 70S ribosome, L14 and L19 interact and together make contacts with the 16S rRNA in bridges B5 and B8.

Its function is as follows. Binds to 23S rRNA. Forms part of two intersubunit bridges in the 70S ribosome. The sequence is that of Large ribosomal subunit protein uL14 from Oleidesulfovibrio alaskensis (strain ATCC BAA-1058 / DSM 17464 / G20) (Desulfovibrio alaskensis).